The sequence spans 79 residues: Putative defensin-like protein 203 (79 aa).

The N-terminal stretch at 1-27 (MAKLIVNFSALLMIILLVSNGLPKAVA) is a signal peptide. Cystine bridges form between C30-C79, C40-C64, C49-C73, and C53-C75.

The protein belongs to the DEFL family.

The protein localises to the secreted. The sequence is that of Putative defensin-like protein 203 from Arabidopsis thaliana (Mouse-ear cress).